Here is a 301-residue protein sequence, read N- to C-terminus: 4-diphosphocytidyl-2-C-methyl-D-erythritol kinase (301 aa).

The active site involves Lys-18. Residue 109-119 (PIASGIGGGSA) coordinates ATP. Asp-151 is an active-site residue.

It belongs to the GHMP kinase family. IspE subfamily.

The catalysed reaction is 4-CDP-2-C-methyl-D-erythritol + ATP = 4-CDP-2-C-methyl-D-erythritol 2-phosphate + ADP + H(+). It functions in the pathway isoprenoid biosynthesis; isopentenyl diphosphate biosynthesis via DXP pathway; isopentenyl diphosphate from 1-deoxy-D-xylulose 5-phosphate: step 3/6. Its function is as follows. Catalyzes the phosphorylation of the position 2 hydroxy group of 4-diphosphocytidyl-2C-methyl-D-erythritol. In Rhizobium meliloti (strain 1021) (Ensifer meliloti), this protein is 4-diphosphocytidyl-2-C-methyl-D-erythritol kinase.